Here is a 120-residue protein sequence, read N- to C-terminus: Phosphoribosyl-ATP pyrophosphatase (120 aa).

Belongs to the PRA-PH family.

The protein localises to the cytoplasm. It catalyses the reaction 1-(5-phospho-beta-D-ribosyl)-ATP + H2O = 1-(5-phospho-beta-D-ribosyl)-5'-AMP + diphosphate + H(+). The protein operates within amino-acid biosynthesis; L-histidine biosynthesis; L-histidine from 5-phospho-alpha-D-ribose 1-diphosphate: step 2/9. This chain is Phosphoribosyl-ATP pyrophosphatase, found in Methylibium petroleiphilum (strain ATCC BAA-1232 / LMG 22953 / PM1).